The chain runs to 549 residues: Myotubularin-related protein 9 (549 aa).

At Met1 the chain carries N-acetylmethionine. Positions 4–99 (AELIKTPRVD…LNIASSIEAL (96 aa)) constitute a GRAM domain. Positions 123 to 498 (GWHSFLPEQE…QSLPLWEGIF (376 aa)) constitute a Myotubularin phosphatase domain. A coiled-coil region spans residues 508–542 (LDEAYEEMVNIIEYNKELQAKVNILRRQLAELETE). Ser548 is modified (phosphoserine).

It belongs to the protein-tyrosine phosphatase family. Non-receptor class myotubularin subfamily. Homodimer. Heterodimer (via C-terminus) with lipid phosphatase MTMR6 (via C-terminus). Heterodimer (via coiled coil domain) with lipid phosphatase MTMR7 (via C-terminus). Heterodimer with lipid phosphatase MTMR8. In terms of tissue distribution, expressed in many tissues.

Its subcellular location is the cytoplasm. The protein resides in the cell projection. It localises to the ruffle membrane. The protein localises to the perinuclear region. It is found in the endoplasmic reticulum. Its function is as follows. Acts as an adapter for myotubularin-related phosphatases. Increases lipid phosphatase MTMR6 catalytic activity, specifically towards phosphatidylinositol 3,5-bisphosphate and MTMR6 binding affinity for phosphorylated phosphatidylinositols. Positively regulates lipid phosphatase MTMR7 catalytic activity. Increases MTMR8 catalytic activity towards phosphatidylinositol 3-phosphate. The formation of the MTMR6-MTMR9 complex, stabilizes both MTMR6 and MTMR9 protein levels. Stabilizes MTMR8 protein levels. Plays a role in the late stages of macropinocytosis possibly by regulating MTMR6-mediated dephosphorylation of phosphatidylinositol 3-phosphate in membrane ruffles. Negatively regulates autophagy, in part via its association with MTMR8. Negatively regulates DNA damage-induced apoptosis, in part via its association with MTMR6. Does not bind mono-, di- and tri-phosphorylated phosphatidylinositols, phosphatidic acid and phosphatidylserine. The polypeptide is Myotubularin-related protein 9 (MTMR9) (Homo sapiens (Human)).